A 353-amino-acid chain; its full sequence is UPF0283 membrane protein YcjF (353 aa).

The next 3 membrane-spanning stretches (helical) occupy residues 70 to 90, 100 to 120, and 213 to 233; these read MVMG…VQWT, VALG…GSVV, and ESTL…FIAW.

It belongs to the UPF0283 family.

Its subcellular location is the cell inner membrane. The chain is UPF0283 membrane protein YcjF from Escherichia coli O139:H28 (strain E24377A / ETEC).